Consider the following 215-residue polypeptide: GTP-binding nuclear protein Ran (215 aa).

The 165-residue stretch at 6-170 (DIPTFKLVLV…LWLARKLLGD (165 aa)) folds into the Small GTPase Ran-type domain. GTP contacts are provided by residues 17 to 24 (DGGTGKTT), 35 to 41 (EKKYVAT), Gly-67, 121 to 124 (NKVD), and 149 to 151 (SAK). Residues 36-44 (KKYVATLGV) are switch-I. The interval 67-83 (GQEKFGGLRDGYYIQGQ) is switch-II.

The protein belongs to the small GTPase superfamily. Ran family. Found in a nuclear export complex with RanGTP, exportin and pre-miRNA.

The protein localises to the nucleus. In terms of biological role, GTP-binding protein involved in nucleocytoplasmic transport. Required for the import of protein into the nucleus and also for RNA export. Involved in chromatin condensation and control of cell cycle. The polypeptide is GTP-binding nuclear protein Ran (Brugia malayi (Filarial nematode worm)).